The primary structure comprises 258 residues: Phosphate import ATP-binding protein PstB (258 aa).

An ABC transporter domain is found at 5–247 (IDVSGLNAYY…ERIFSNPSVQ (243 aa)). 37-44 (GPSGCGKS) contacts ATP.

Belongs to the ABC transporter superfamily. Phosphate importer (TC 3.A.1.7) family. As to quaternary structure, the complex is composed of two ATP-binding proteins (PstB), two transmembrane proteins (PstC and PstA) and a solute-binding protein (PstS).

The protein localises to the cell membrane. The enzyme catalyses phosphate(out) + ATP + H2O = ADP + 2 phosphate(in) + H(+). Functionally, part of the ABC transporter complex PstSACB involved in phosphate import. Responsible for energy coupling to the transport system. The chain is Phosphate import ATP-binding protein PstB from Streptomyces coelicolor (strain ATCC BAA-471 / A3(2) / M145).